The primary structure comprises 238 residues: Uridylate kinase (238 aa).

Position 12–15 (12–15) interacts with ATP; it reads KLSG. Residue Gly-54 coordinates UMP. Positions 55 and 59 each coordinate ATP. Residues Asp-74 and 135–142 contribute to the UMP site; that span reads TGNPFFTT. Thr-162, Tyr-168, and Asp-171 together coordinate ATP.

Belongs to the UMP kinase family. As to quaternary structure, homohexamer.

It is found in the cytoplasm. The enzyme catalyses UMP + ATP = UDP + ADP. Its pathway is pyrimidine metabolism; CTP biosynthesis via de novo pathway; UDP from UMP (UMPK route): step 1/1. Inhibited by UTP. Functionally, catalyzes the reversible phosphorylation of UMP to UDP. The chain is Uridylate kinase from Bordetella avium (strain 197N).